The sequence spans 235 residues: Serine protease SplA (235 aa).

A signal peptide spans 1–35 (MNKNVMVKGLTALTILTSLGFAENISNQPHSIAKA). Residues His74, Asp113, and Ser189 each act as charge relay system in the active site.

The protein belongs to the peptidase S1B family.

It localises to the secreted. The sequence is that of Serine protease SplA (splA) from Staphylococcus aureus (strain USA300).